The primary structure comprises 272 residues: MAAGEISTPQEYIGHHLNNLQLDLRTFELVNPHDAPATFWVLNIDSMFFSVVLGLVFLVLFRQVAKSATSGVPGKLQAAIELVIGFVDNNVRDMYHGKSKVIAPLALTIFVWVFLMNFMDLLPIDLLPYIGEHFLGLPALRVVPSADVNITLSMALGVFVLILFYSIKMKGIGGFSKELTLQPFNHPIFIPINLILEGVSLLSKPVSLGLRLFGNMYAGELIFILIAGLLPWWSQWILSVPWAIFHILIISLQAFIFMVLTIVYLSMASEEH.

A run of 5 helical transmembrane segments spans residues 41 to 61 (VLNI…LVLF), 101 to 121 (VIAP…FMDL), 147 to 167 (DVNI…FYSI), 221 to 241 (LIFI…LSVP), and 243 to 263 (AIFH…LTIV).

It belongs to the ATPase A chain family. F-type ATPases have 2 components, CF(1) - the catalytic core - and CF(0) - the membrane proton channel. CF(1) has five subunits: alpha(3), beta(3), gamma(1), delta(1), epsilon(1). CF(0) has three main subunits: a(1), b(2) and c(9-12). The alpha and beta chains form an alternating ring which encloses part of the gamma chain. CF(1) is attached to CF(0) by a central stalk formed by the gamma and epsilon chains, while a peripheral stalk is formed by the delta and b chains.

Its subcellular location is the cell inner membrane. Its function is as follows. Key component of the proton channel; it plays a direct role in the translocation of protons across the membrane. This Erwinia tasmaniensis (strain DSM 17950 / CFBP 7177 / CIP 109463 / NCPPB 4357 / Et1/99) protein is ATP synthase subunit a.